We begin with the raw amino-acid sequence, 153 residues long: Arginine repressor (153 aa).

The protein belongs to the ArgR family.

The protein localises to the cytoplasm. It participates in amino-acid biosynthesis; L-arginine biosynthesis [regulation]. In terms of biological role, regulates arginine biosynthesis genes. The polypeptide is Arginine repressor (Haemophilus ducreyi (strain 35000HP / ATCC 700724)).